Consider the following 84-residue polypeptide: U8-theraphotoxin-Hhn1b (84 aa).

The N-terminal stretch at 1-21 is a signal peptide; sequence MKVVLIVCLVWVMAMMELVSC. Cystine bridges form between Cys-23/Cys-35, Cys-29/Cys-44, Cys-34/Cys-67, and Cys-54/Cys-75.

The protein belongs to the AVIT (prokineticin) family. In terms of tissue distribution, expressed by the venom gland.

The protein resides in the secreted. The chain is U8-theraphotoxin-Hhn1b from Cyriopagopus hainanus (Chinese bird spider).